A 157-amino-acid polypeptide reads, in one-letter code: MDRFVSTYTMRLDAKGRVSIPAPFRTVLAKDGADGLYCHPSLAEPALDAGGNRLVGEIDALIESYPPYSEAREELAAALYGTSETLRIDPEGRVVLSDTLKAHAAITDQVAFVGLGHKFRIWEPERLKAHLAEATQRVRELRQAIGSRAENPRSTKA.

SpoVT-AbrB domains are found at residues 7-52 (TYTM…AGGN) and 83-126 (SETL…EPER).

This sequence belongs to the MraZ family. Forms oligomers.

The protein localises to the cytoplasm. Its subcellular location is the nucleoid. This chain is Transcriptional regulator MraZ, found in Xanthobacter autotrophicus (strain ATCC BAA-1158 / Py2).